A 173-amino-acid chain; its full sequence is Photosystem I assembly protein Ycf3 (173 aa).

TPR repeat units follow at residues 35–68 (AYVYYRDGLSAQNDGDYAEALENYEEALKLEENS), 72–105 (SETLKNMAIIYMSNGEEERAIETYRKALEENPNQ), and 120–153 (GRIAEEGGEQDSADRWFDQAADVWTQAVRLNPGG).

Belongs to the Ycf3 family.

It is found in the cellular thylakoid membrane. Its function is as follows. Essential for the assembly of the photosystem I (PSI) complex. May act as a chaperone-like factor to guide the assembly of the PSI subunits. The protein is Photosystem I assembly protein Ycf3 of Synechococcus sp. (strain CC9605).